Here is a 160-residue protein sequence, read N- to C-terminus: MSGAVCPGSFDPVTLGHIDIFERAAAQFDEVVVAVMVNPNKTGMFTHEERIALIEESTTHLPNLRVESGQGLIVDFVKARGLTAIVKGLRTGTDFEYELQMAQMNNHIAGVDTFFIATTPRYSFVSSSLAKEVATLGGDVSELLPAPVNARLKAKLAARD.

Ser9 contacts substrate. ATP-binding positions include 9-10 (SF) and His17. Lys41, Ile73, and Lys87 together coordinate substrate. ATP-binding positions include 88–90 (GLR), Glu98, and 122–128 (YSFVSSS).

It belongs to the bacterial CoaD family. In terms of assembly, homohexamer. Mg(2+) serves as cofactor.

The protein localises to the cytoplasm. It catalyses the reaction (R)-4'-phosphopantetheine + ATP + H(+) = 3'-dephospho-CoA + diphosphate. The protein operates within cofactor biosynthesis; coenzyme A biosynthesis; CoA from (R)-pantothenate: step 4/5. Its function is as follows. Reversibly transfers an adenylyl group from ATP to 4'-phosphopantetheine, yielding dephospho-CoA (dPCoA) and pyrophosphate. The polypeptide is Phosphopantetheine adenylyltransferase (Mycolicibacterium vanbaalenii (strain DSM 7251 / JCM 13017 / BCRC 16820 / KCTC 9966 / NRRL B-24157 / PYR-1) (Mycobacterium vanbaalenii)).